Reading from the N-terminus, the 347-residue chain is MPAASPQLLPTLPLVTDFATTHSGLRHAAGRFAPSPTSALHLGNLRTALAAWLLARSTGRRFVVRIEDLDRARVAAAGKIASTQLRDLESLGLDWDGPVVRQSERLDLYADAVAGLETYPCFCTRREIAAATTAPNEADWRPYPGTCRRLTVQQRHERLTTRAPATRLASQLNTFEATDLARGCARGRVDDLVLVRNDGTPAYNLAVVVDDGLQGVDQVVRARDLWSSAPRQAQLAELLGFIPPVYAHTGLVTGPGGVRLSKSAGAAGLSDLVDSGIDHRQVVAWLCRSLGLPEVADPHELVNNVALTPPTPVAGIHRLDPRPLGGAMGWWSDAVLDVAVLRETRRP.

L-glutamate is bound by residues 31–35 (RFAPS) and Glu-67. The 'HIGH' region motif lies at 34–44 (PSPTSALHLGN). The Zn(2+) site is built by Cys-121, Cys-123, Tyr-143, and Cys-147. The L-glutamate site is built by Tyr-203 and Arg-221. The 'KMSKS' region motif lies at 259–263 (RLSKS). Lys-262 contacts ATP.

This sequence belongs to the class-I aminoacyl-tRNA synthetase family. GluQ subfamily. Zn(2+) serves as cofactor.

Catalyzes the tRNA-independent activation of glutamate in presence of ATP and the subsequent transfer of glutamate onto a tRNA(Asp). Glutamate is transferred on the 2-amino-5-(4,5-dihydroxy-2-cyclopenten-1-yl) moiety of the queuosine in the wobble position of the QUC anticodon. This is Glutamyl-Q tRNA(Asp) synthetase from Cutibacterium acnes (strain DSM 16379 / KPA171202) (Propionibacterium acnes).